The following is a 272-amino-acid chain: Phosphonates import ATP-binding protein PhnC (272 aa).

Positions 2–246 (LELQRLTKTY…VLATIYGAED (245 aa)) constitute an ABC transporter domain. ATP is bound at residue 35–42 (GPSGAGKS). Residues 248 to 272 (ASSGREPAPEREPEDTERHLAEVGR) form a disordered region. The span at 254–272 (PAPEREPEDTERHLAEVGR) shows a compositional bias: basic and acidic residues.

This sequence belongs to the ABC transporter superfamily. Phosphonates importer (TC 3.A.1.9.1) family. In terms of assembly, the complex is composed of two ATP-binding proteins (PhnC), two transmembrane proteins (PhnE) and a solute-binding protein (PhnD).

Its subcellular location is the cell inner membrane. It carries out the reaction phosphonate(out) + ATP + H2O = phosphonate(in) + ADP + phosphate + H(+). In terms of biological role, part of the ABC transporter complex PhnCDE involved in phosphonates import. Responsible for energy coupling to the transport system. The sequence is that of Phosphonates import ATP-binding protein PhnC from Chromohalobacter salexigens (strain ATCC BAA-138 / DSM 3043 / CIP 106854 / NCIMB 13768 / 1H11).